Reading from the N-terminus, the 435-residue chain is Probable glycine dehydrogenase (decarboxylating) subunit 1 (435 aa).

This sequence belongs to the GcvP family. N-terminal subunit subfamily. As to quaternary structure, the glycine cleavage system is composed of four proteins: P, T, L and H. In this organism, the P 'protein' is a heterodimer of two subunits.

It carries out the reaction N(6)-[(R)-lipoyl]-L-lysyl-[glycine-cleavage complex H protein] + glycine + H(+) = N(6)-[(R)-S(8)-aminomethyldihydrolipoyl]-L-lysyl-[glycine-cleavage complex H protein] + CO2. Its function is as follows. The glycine cleavage system catalyzes the degradation of glycine. The P protein binds the alpha-amino group of glycine through its pyridoxal phosphate cofactor; CO(2) is released and the remaining methylamine moiety is then transferred to the lipoamide cofactor of the H protein. The polypeptide is Probable glycine dehydrogenase (decarboxylating) subunit 1 (Coprothermobacter proteolyticus (strain ATCC 35245 / DSM 5265 / OCM 4 / BT)).